The following is a 282-amino-acid chain: Energy-coupling factor transporter ATP-binding protein EcfA1 (282 aa).

In terms of domain architecture, ABC transporter spans 9–243; sequence IEIDNLSFKY…NDELLNIGLD (235 aa). Residue 43–50 coordinates ATP; it reads GHNGSGKS.

It belongs to the ABC transporter superfamily. Energy-coupling factor EcfA family. As to quaternary structure, forms a stable energy-coupling factor (ECF) transporter complex composed of 2 membrane-embedded substrate-binding proteins (S component), 2 ATP-binding proteins (A component) and 2 transmembrane proteins (T component).

The protein localises to the cell membrane. Functionally, ATP-binding (A) component of a common energy-coupling factor (ECF) ABC-transporter complex. Unlike classic ABC transporters this ECF transporter provides the energy necessary to transport a number of different substrates. This Ligilactobacillus salivarius (strain UCC118) (Lactobacillus salivarius) protein is Energy-coupling factor transporter ATP-binding protein EcfA1.